The following is a 99-amino-acid chain: MALTLTDVKRIAHLARLELPDADAEHTLIQLNDFFGLVEQMQAVDTTGISPLAHPIEQIEDVALRLRNDAVTENVNRDDYQRSAPAVQDGLYLVPKVIE.

Belongs to the GatC family. Heterotrimer of A, B and C subunits.

The enzyme catalyses L-glutamyl-tRNA(Gln) + L-glutamine + ATP + H2O = L-glutaminyl-tRNA(Gln) + L-glutamate + ADP + phosphate + H(+). The catalysed reaction is L-aspartyl-tRNA(Asn) + L-glutamine + ATP + H2O = L-asparaginyl-tRNA(Asn) + L-glutamate + ADP + phosphate + 2 H(+). Functionally, allows the formation of correctly charged Asn-tRNA(Asn) or Gln-tRNA(Gln) through the transamidation of misacylated Asp-tRNA(Asn) or Glu-tRNA(Gln) in organisms which lack either or both of asparaginyl-tRNA or glutaminyl-tRNA synthetases. The reaction takes place in the presence of glutamine and ATP through an activated phospho-Asp-tRNA(Asn) or phospho-Glu-tRNA(Gln). This chain is Aspartyl/glutamyl-tRNA(Asn/Gln) amidotransferase subunit C, found in Paraburkholderia phymatum (strain DSM 17167 / CIP 108236 / LMG 21445 / STM815) (Burkholderia phymatum).